The sequence spans 216 residues: 3-keto-L-gulonate-6-phosphate decarboxylase UlaD (216 aa).

A substrate-binding site is contributed by D11. The Mg(2+) site is built by E33 and D62. Residue R192 participates in substrate binding.

This sequence belongs to the HPS/KGPDC family. KGPDC subfamily. In terms of assembly, homodimer. Mg(2+) serves as cofactor.

The catalysed reaction is 3-dehydro-L-gulonate 6-phosphate + H(+) = L-xylulose 5-phosphate + CO2. The protein operates within cofactor degradation; L-ascorbate degradation; D-xylulose 5-phosphate from L-ascorbate: step 2/4. Its function is as follows. Catalyzes the decarboxylation of 3-keto-L-gulonate-6-P into L-xylulose-5-P. Is involved in the anaerobic L-ascorbate utilization. The chain is 3-keto-L-gulonate-6-phosphate decarboxylase UlaD from Salmonella typhi.